Consider the following 79-residue polypeptide: Pigment-dispersing hormone type 1 (79 aa).

A signal peptide spans 1–22 (MRSAVVVALLVMVAMSLQLTAA). Alanine amide is present on Ala-76.

It belongs to the arthropod PDH family. As to expression, eyestalk.

Its subcellular location is the secreted. The pigment-dispersing hormone causes the migration of the distal retinal pigment into the proximal end of the pigment chromatophore cells and thus decreases the amount of light entering the retinulas. May also function as a neurotransmitter and/or neuromodulator. This chain is Pigment-dispersing hormone type 1 (PDH1), found in Penaeus vannamei (Whiteleg shrimp).